Here is a 63-residue protein sequence, read N- to C-terminus: Metallothionein-1 (63 aa).

Repeats lie at residues 23 to 30 and 56 to 63; these read CGDKCECK.

Belongs to the metallothionein superfamily. Type 9 family.

Its function is as follows. The metallothioneins are involved in the cellular sequestration of toxic metal ions. This Candida glabrata (strain ATCC 2001 / BCRC 20586 / JCM 3761 / NBRC 0622 / NRRL Y-65 / CBS 138) (Yeast) protein is Metallothionein-1 (MT-I).